The chain runs to 365 residues: Mitogen-activated protein kinase 13 (365 aa).

One can recognise a Protein kinase domain in the interval 25–308; the sequence is YVSPTHVGSG…AAQALTHPFF (284 aa). ATP is bound at residue 31 to 39; that stretch reads VGSGAYGSV. Ser-47 is modified (phosphoserine). Lys-54 provides a ligand contact to ATP. Asp-150 (proton acceptor) is an active-site residue. Phosphothreonine; by MAP2K3, MAP2K4, MAP2K6 and MAP2K7 is present on Thr-180. A TXY motif is present at residues 180 to 182; that stretch reads TGY. The residue at position 182 (Tyr-182) is a Phosphotyrosine; by MAP2K3, MAP2K4, MAP2K6 and MAP2K7. Residue Ser-350 is modified to Phosphoserine.

The protein belongs to the protein kinase superfamily. CMGC Ser/Thr protein kinase family. MAP kinase subfamily. As to quaternary structure, interacts with MAPK8IP2. It depends on Mg(2+) as a cofactor. Post-translationally, dually phosphorylated on Thr-180 and Tyr-182 by MAP2K3/MKK3, MAP2K4/MKK4, MAP2K6/MKK6 and MAP2K7/MKK7, which activates the enzyme. Dephosphorylated by dual specificity phosphatase DUSP1.

It carries out the reaction L-seryl-[protein] + ATP = O-phospho-L-seryl-[protein] + ADP + H(+). It catalyses the reaction L-threonyl-[protein] + ATP = O-phospho-L-threonyl-[protein] + ADP + H(+). With respect to regulation, activated by phosphorylation on threonine and tyrosine by dual specificity kinases, MAP2K3/MKK3, MAP2K6/MKK6, MAP2K4/MKK4 and MAP2K7/MKK7. Activation by ultraviolet radiation, hyperosmotic shock, anisomycin or by TNF-alpha is mediated by MAP2K3/MKK3. Inhibited by dual specificity phosphatase DUSP1. Its function is as follows. Serine/threonine kinase which acts as an essential component of the MAP kinase signal transduction pathway. MAPK13 is one of the four p38 MAPKs which play an important role in the cascades of cellular responses evoked by extracellular stimuli such as pro-inflammatory cytokines or physical stress leading to direct activation of transcription factors such as ELK1 and ATF2. Accordingly, p38 MAPKs phosphorylate a broad range of proteins and it has been estimated that they may have approximately 200 to 300 substrates each. MAPK13 is one of the less studied p38 MAPK isoforms. Some of the targets are downstream kinases such as MAPKAPK2, which are activated through phosphorylation and further phosphorylate additional targets. Plays a role in the regulation of protein translation by phosphorylating and inactivating EEF2K. Involved in cytoskeletal remodeling through phosphorylation of MAPT and STMN1. Mediates UV irradiation induced up-regulation of the gene expression of CXCL14. Plays an important role in the regulation of epidermal keratinocyte differentiation, apoptosis and skin tumor development. Phosphorylates the transcriptional activator MYB in response to stress which leads to rapid MYB degradation via a proteasome-dependent pathway. MAPK13 also phosphorylates and down-regulates PRKD1 during regulation of insulin secretion in pancreatic beta cells. This chain is Mitogen-activated protein kinase 13 (MAPK13), found in Pan troglodytes (Chimpanzee).